The primary structure comprises 804 residues: Leucine--tRNA ligase (804 aa).

The 'HIGH' region motif lies at 40–51 (PYPSGAGLHVGH). The 'KMSKS' region signature appears at 576–580 (KMSKS). Lys-579 lines the ATP pocket.

It belongs to the class-I aminoacyl-tRNA synthetase family.

The protein resides in the cytoplasm. It carries out the reaction tRNA(Leu) + L-leucine + ATP = L-leucyl-tRNA(Leu) + AMP + diphosphate. This chain is Leucine--tRNA ligase, found in Staphylococcus aureus (strain bovine RF122 / ET3-1).